Reading from the N-terminus, the 246-residue chain is Probable transcriptional regulatory protein ORF2U (246 aa).

This sequence belongs to the TACO1 family.

Its subcellular location is the cytoplasm. This Hathewaya histolytica (Clostridium histolyticum) protein is Probable transcriptional regulatory protein ORF2U.